A 964-amino-acid chain; its full sequence is uncharacterized protein (964 aa).

Acidic residues predominate over residues 97 to 117 (DSESDVGSDAESDAESDAESD). The interval 97-208 (DSESDVGSDA…SNSIDNESES (112 aa)) is disordered. Low complexity predominate over residues 121 to 148 (HTQNNTNTPINNITLINLDSSNNSTQSD). Acidic residues predominate over residues 149–163 (NESDNESDNESDNES). Residues 192 to 203 (NSDNIGNSNSID) are compositionally biased toward low complexity.

This is an uncharacterized protein from Acanthamoeba polyphaga (Amoeba).